Here is a 571-residue protein sequence, read N- to C-terminus: Glutamate--tRNA ligase (571 aa).

Over residues 75–88 the composition is skewed to basic and acidic residues; the sequence is GGPREDVARDKEGL. The segment at 75-98 is disordered; that stretch reads GGPREDVARDKEGLKPLPGAEPGN. The short motif at 105–115 is the 'HIGH' region element; the sequence is PNPSGPLHIGH.

It belongs to the class-I aminoacyl-tRNA synthetase family. Glutamate--tRNA ligase type 2 subfamily.

The protein localises to the cytoplasm. The enzyme catalyses tRNA(Glu) + L-glutamate + ATP = L-glutamyl-tRNA(Glu) + AMP + diphosphate. Its function is as follows. Catalyzes the attachment of glutamate to tRNA(Glu) in a two-step reaction: glutamate is first activated by ATP to form Glu-AMP and then transferred to the acceptor end of tRNA(Glu). The chain is Glutamate--tRNA ligase from Methanopyrus kandleri (strain AV19 / DSM 6324 / JCM 9639 / NBRC 100938).